Here is a 905-residue protein sequence, read N- to C-terminus: DNA mismatch repair protein MutS (905 aa).

The interval 272-292 is disordered; the sequence is KKPPLSPPSREATGSTMAIDP. Residue 654–661 coordinates ATP; sequence GPNMAGKS.

Belongs to the DNA mismatch repair MutS family.

Its function is as follows. This protein is involved in the repair of mismatches in DNA. It is possible that it carries out the mismatch recognition step. This protein has a weak ATPase activity. The polypeptide is DNA mismatch repair protein MutS (Rhodopseudomonas palustris (strain BisB18)).